We begin with the raw amino-acid sequence, 432 residues long: 3-phosphoshikimate 1-carboxyvinyltransferase (432 aa).

3 residues coordinate 3-phosphoshikimate: lysine 22, serine 23, and arginine 27. Phosphoenolpyruvate is bound at residue lysine 22. Phosphoenolpyruvate-binding residues include glycine 96 and arginine 127. 3-phosphoshikimate contacts are provided by serine 173, serine 174, glutamine 175, serine 201, aspartate 316, asparagine 339, and lysine 343. Glutamine 175 is a binding site for phosphoenolpyruvate. Residue aspartate 316 is the Proton acceptor of the active site. Phosphoenolpyruvate contacts are provided by arginine 347, arginine 391, and lysine 416.

This sequence belongs to the EPSP synthase family. Monomer.

It is found in the cytoplasm. It catalyses the reaction 3-phosphoshikimate + phosphoenolpyruvate = 5-O-(1-carboxyvinyl)-3-phosphoshikimate + phosphate. The protein operates within metabolic intermediate biosynthesis; chorismate biosynthesis; chorismate from D-erythrose 4-phosphate and phosphoenolpyruvate: step 6/7. Catalyzes the transfer of the enolpyruvyl moiety of phosphoenolpyruvate (PEP) to the 5-hydroxyl of shikimate-3-phosphate (S3P) to produce enolpyruvyl shikimate-3-phosphate and inorganic phosphate. This Histophilus somni (strain 2336) (Haemophilus somnus) protein is 3-phosphoshikimate 1-carboxyvinyltransferase.